Here is a 274-residue protein sequence, read N- to C-terminus: 2,3,4,5-tetrahydropyridine-2,6-dicarboxylate N-succinyltransferase (274 aa).

The substrate site is built by R106 and D143.

The protein belongs to the transferase hexapeptide repeat family. In terms of assembly, homotrimer.

The protein resides in the cytoplasm. The catalysed reaction is (S)-2,3,4,5-tetrahydrodipicolinate + succinyl-CoA + H2O = (S)-2-succinylamino-6-oxoheptanedioate + CoA. Its pathway is amino-acid biosynthesis; L-lysine biosynthesis via DAP pathway; LL-2,6-diaminopimelate from (S)-tetrahydrodipicolinate (succinylase route): step 1/3. The protein is 2,3,4,5-tetrahydropyridine-2,6-dicarboxylate N-succinyltransferase of Rickettsia conorii (strain ATCC VR-613 / Malish 7).